A 129-amino-acid chain; its full sequence is UPF0148 protein AF_2370 (129 aa).

A disordered region spans residues 61–80; that stretch reads SAAKAESEEKPPESTKPAVK.

The protein belongs to the UPF0148 family.

The chain is UPF0148 protein AF_2370 from Archaeoglobus fulgidus (strain ATCC 49558 / DSM 4304 / JCM 9628 / NBRC 100126 / VC-16).